The chain runs to 665 residues: UvrABC system protein B (665 aa).

The Helicase ATP-binding domain occupies 31-414 (DGVKGGEKAQ…EMEQTETVVQ (384 aa)). Residue 44-51 (GATGTGKT) coordinates ATP. The Beta-hairpin signature appears at 97-120 (YYDYYQPEAYVPSSDTYIEKDSSI). The region spanning 435–601 (QIDDLVGEIH…TIIKEIRDLI (167 aa)) is the Helicase C-terminal domain. Residues 629–664 (ADLLMKLEREMKDAAKALDFETAATLRDTILELKAA) form the UVR domain.

The protein belongs to the UvrB family. In terms of assembly, forms a heterotetramer with UvrA during the search for lesions. Interacts with UvrC in an incision complex.

Its subcellular location is the cytoplasm. The UvrABC repair system catalyzes the recognition and processing of DNA lesions. A damage recognition complex composed of 2 UvrA and 2 UvrB subunits scans DNA for abnormalities. Upon binding of the UvrA(2)B(2) complex to a putative damaged site, the DNA wraps around one UvrB monomer. DNA wrap is dependent on ATP binding by UvrB and probably causes local melting of the DNA helix, facilitating insertion of UvrB beta-hairpin between the DNA strands. Then UvrB probes one DNA strand for the presence of a lesion. If a lesion is found the UvrA subunits dissociate and the UvrB-DNA preincision complex is formed. This complex is subsequently bound by UvrC and the second UvrB is released. If no lesion is found, the DNA wraps around the other UvrB subunit that will check the other stand for damage. This Enterococcus faecalis (strain ATCC 700802 / V583) protein is UvrABC system protein B.